Here is a 228-residue protein sequence, read N- to C-terminus: HTH-type transcriptional repressor RspR (228 aa).

Positions 11-78 (QPVNQQIYRI…PQRGSYVNKI (68 aa)) constitute an HTH gntR-type domain. The H-T-H motif DNA-binding region spans 38–57 (EKEVSVRFNVSRQPVREAFI).

Repressor of the rspAB operon. Acts by binding directly to the upstream region of rspA. This chain is HTH-type transcriptional repressor RspR (rspR), found in Escherichia coli (strain K12).